The following is a 319-amino-acid chain: N-acyl-aromatic-L-amino acid amidohydrolase (carboxylate-forming) (319 aa).

A hydrolytic domain region spans residues 1 to 210 (MCSLPVPREP…TVLDFIELFN (210 aa)). H21 and E24 together coordinate Zn(2+). Residues R63 and 70–71 (NR) each bind substrate. H116 serves as a coordination point for Zn(2+). Residues E178 and Y288 each contribute to the substrate site. Residues 211 to 318 (QGTAFPAFEM…PALTPAPSPA (108 aa)) are shielding domain.

This sequence belongs to the AspA/AstE family. Aspartoacylase subfamily. As to quaternary structure, exists as a mixture of homodimers and homotetramer, both catalytically active. (Microbial infection) Interacts with hepatitis C virus/HCV core protein. The cofactor is Zn(2+).

Its subcellular location is the apical cell membrane. The protein localises to the cytoplasm. The enzyme catalyses an N-acyl-aromatic L-alpha-amino acid + H2O = an aromatic L-alpha-amino acid + a carboxylate. It carries out the reaction an N-acetyl-L-cysteine-S-conjugate + H2O = an S-substituted L-cysteine + acetate. Plays an important role in deacetylating mercapturic acids in kidney proximal tubules. Also acts on N-acetyl-aromatic amino acids. The chain is N-acyl-aromatic-L-amino acid amidohydrolase (carboxylate-forming) (ACY3) from Homo sapiens (Human).